The following is a 252-amino-acid chain: 5-oxoprolinase subunit A (252 aa).

This sequence belongs to the LamB/PxpA family. Forms a complex composed of PxpA, PxpB and PxpC.

The enzyme catalyses 5-oxo-L-proline + ATP + 2 H2O = L-glutamate + ADP + phosphate + H(+). Its function is as follows. Catalyzes the cleavage of 5-oxoproline to form L-glutamate coupled to the hydrolysis of ATP to ADP and inorganic phosphate. This Mycobacterium ulcerans (strain Agy99) protein is 5-oxoprolinase subunit A.